The chain runs to 299 residues: Protein sprouty homolog 4 (299 aa).

Residue Met1 is modified to N-acetylmethionine. 2 disordered regions span residues 50-79 (NDYI…PTPA) and 92-127 (FSGR…ASPR). Residues 92 to 107 (FSGRPSSVSSSSSTSS) show a composition bias toward low complexity. Ser125 carries the phosphoserine modification. The SPR domain maps to 166–273 (KCKECASPRT…GYDRLRRPGC (108 aa)).

This sequence belongs to the sprouty family. Interacts (via C-terminus) with TESK1 (via both C- and N-termini); the interaction inhibits TESK1 kinase activity. Interacts with RAF1. Interacts with CAV1 (via C-terminus).

The protein localises to the cytoplasm. Its subcellular location is the cell projection. It is found in the ruffle membrane. Its function is as follows. Suppresses the insulin receptor and EGFR-transduced MAPK signaling pathway, but does not inhibit MAPK activation by a constitutively active mutant Ras. Probably impairs the formation of GTP-Ras. Inhibits Ras-independent, but not Ras-dependent, activation of RAF1. Represses integrin-mediated cell spreading via inhibition of TESK1-mediated phosphorylation of cofilin. This chain is Protein sprouty homolog 4 (SPRY4), found in Bos taurus (Bovine).